We begin with the raw amino-acid sequence, 484 residues long: uncharacterized protein (484 aa).

In terms of domain architecture, HTH gntR-type spans Val-14–Ser-82. The H-T-H motif DNA-binding region spans Gln-42–Asp-61. Lys-327 is subject to N6-(pyridoxal phosphate)lysine.

It in the C-terminal section; belongs to the class-I pyridoxal-phosphate-dependent aminotransferase family. Requires pyridoxal 5'-phosphate as cofactor.

This is an uncharacterized protein from Bacillus subtilis (strain 168).